The sequence spans 200 residues: Holliday junction branch migration complex subunit RuvA (200 aa).

A domain I region spans residues 1–64; that stretch reads MFTYFRGELI…EDLMQLFGFL (64 aa). Positions 65–143 are domain II; sequence EEEERQLFRL…KLRPSGGTKS (79 aa). The interval 144–148 is flexible linker; sequence VSRLS. Positions 148–200 are domain III; that stretch reads SESSMRDDAVNALVTLGFLRSVAQKAVTESLTSLRNPQVEDLVRDALLTIRTP.

This sequence belongs to the RuvA family. In terms of assembly, homotetramer. Forms an RuvA(8)-RuvB(12)-Holliday junction (HJ) complex. HJ DNA is sandwiched between 2 RuvA tetramers; dsDNA enters through RuvA and exits via RuvB. An RuvB hexamer assembles on each DNA strand where it exits the tetramer. Each RuvB hexamer is contacted by two RuvA subunits (via domain III) on 2 adjacent RuvB subunits; this complex drives branch migration. In the full resolvosome a probable DNA-RuvA(4)-RuvB(12)-RuvC(2) complex forms which resolves the HJ.

Its subcellular location is the cytoplasm. Its function is as follows. The RuvA-RuvB-RuvC complex processes Holliday junction (HJ) DNA during genetic recombination and DNA repair, while the RuvA-RuvB complex plays an important role in the rescue of blocked DNA replication forks via replication fork reversal (RFR). RuvA specifically binds to HJ cruciform DNA, conferring on it an open structure. The RuvB hexamer acts as an ATP-dependent pump, pulling dsDNA into and through the RuvAB complex. HJ branch migration allows RuvC to scan DNA until it finds its consensus sequence, where it cleaves and resolves the cruciform DNA. This chain is Holliday junction branch migration complex subunit RuvA, found in Chlorobium phaeobacteroides (strain BS1).